Consider the following 134-residue polypeptide: Ribosome-binding factor A (134 aa).

It belongs to the RbfA family. In terms of assembly, monomer. Binds 30S ribosomal subunits, but not 50S ribosomal subunits or 70S ribosomes.

Its subcellular location is the cytoplasm. Functionally, one of several proteins that assist in the late maturation steps of the functional core of the 30S ribosomal subunit. Associates with free 30S ribosomal subunits (but not with 30S subunits that are part of 70S ribosomes or polysomes). Required for efficient processing of 16S rRNA. May interact with the 5'-terminal helix region of 16S rRNA. This chain is Ribosome-binding factor A, found in Rhizobium etli (strain CIAT 652).